We begin with the raw amino-acid sequence, 66 residues long: Small ribosomal subunit protein bS21 (66 aa).

Residues 47-66 are disordered; the sequence is KAQEAARRKRKFARKRMYED. The span at 53-66 shows a compositional bias: basic residues; the sequence is RRKRKFARKRMYED.

The protein belongs to the bacterial ribosomal protein bS21 family.

In Rickettsia bellii (strain RML369-C), this protein is Small ribosomal subunit protein bS21.